A 206-amino-acid chain; its full sequence is Thymidylate kinase (206 aa).

An ATP-binding site is contributed by 11–18 (GIDGAGKT).

It belongs to the thymidylate kinase family.

The enzyme catalyses dTMP + ATP = dTDP + ADP. In terms of biological role, phosphorylation of dTMP to form dTDP in both de novo and salvage pathways of dTTP synthesis. This Burkholderia mallei (strain NCTC 10247) protein is Thymidylate kinase.